Reading from the N-terminus, the 287-residue chain is Succinate--CoA ligase [ADP-forming] subunit alpha 2 (287 aa).

Residues 17–20 (TGYQ), lysine 43, and 96–98 (ITE) contribute to the CoA site. Tyrosine 159 contributes to the substrate binding site. Catalysis depends on histidine 246, which acts as the Tele-phosphohistidine intermediate.

It belongs to the succinate/malate CoA ligase alpha subunit family. In terms of assembly, heterotetramer of two alpha and two beta subunits.

The catalysed reaction is succinate + ATP + CoA = succinyl-CoA + ADP + phosphate. It catalyses the reaction GTP + succinate + CoA = succinyl-CoA + GDP + phosphate. The protein operates within carbohydrate metabolism; tricarboxylic acid cycle; succinate from succinyl-CoA (ligase route): step 1/1. Succinyl-CoA synthetase functions in the citric acid cycle (TCA), coupling the hydrolysis of succinyl-CoA to the synthesis of either ATP or GTP and thus represents the only step of substrate-level phosphorylation in the TCA. The alpha subunit of the enzyme binds the substrates coenzyme A and phosphate, while succinate binding and nucleotide specificity is provided by the beta subunit. This Archaeoglobus fulgidus (strain ATCC 49558 / DSM 4304 / JCM 9628 / NBRC 100126 / VC-16) protein is Succinate--CoA ligase [ADP-forming] subunit alpha 2.